The following is a 679-amino-acid chain: DNA ligase (679 aa).

Residues 32–36 (DTLYD), 81–82 (SL), and glutamate 115 contribute to the NAD(+) site. Residue lysine 117 is the N6-AMP-lysine intermediate of the active site. Arginine 138, glutamate 175, lysine 293, and lysine 317 together coordinate NAD(+). Positions 411, 414, 429, and 434 each coordinate Zn(2+). Residues 601 to 679 (NSSGALLGKT…EAELQKLLST (79 aa)) enclose the BRCT domain.

This sequence belongs to the NAD-dependent DNA ligase family. LigA subfamily. Requires Mg(2+) as cofactor. Mn(2+) serves as cofactor.

The catalysed reaction is NAD(+) + (deoxyribonucleotide)n-3'-hydroxyl + 5'-phospho-(deoxyribonucleotide)m = (deoxyribonucleotide)n+m + AMP + beta-nicotinamide D-nucleotide.. DNA ligase that catalyzes the formation of phosphodiester linkages between 5'-phosphoryl and 3'-hydroxyl groups in double-stranded DNA using NAD as a coenzyme and as the energy source for the reaction. It is essential for DNA replication and repair of damaged DNA. This Parasynechococcus marenigrum (strain WH8102) protein is DNA ligase.